The primary structure comprises 304 residues: Recombination-associated protein RdgC (304 aa).

This sequence belongs to the RdgC family.

The protein resides in the cytoplasm. The protein localises to the nucleoid. May be involved in recombination. This Shewanella sp. (strain W3-18-1) protein is Recombination-associated protein RdgC.